The primary structure comprises 395 residues: Ribose-phosphate pyrophosphokinase 2, chloroplastic (395 aa).

Residues 1–23 (MASPAPRSLSSSSSSSSSSFCPS) show a composition bias toward low complexity. The segment at 1–33 (MASPAPRSLSSSSSSSSSSFCPSISPPPRSPSR) is disordered. A chloroplast-targeting transit peptide spans 1 to 42 (MASPAPRSLSSSSSSSSSSFCPSISPPPRSPSRASLPFSVKC). Mg(2+) contacts are provided by Asp209, His211, Asp220, and Asp224. The tract at residues 295–310 (GKVAVMLDDMIDTAGT) is binding of phosphoribosylpyrophosphate.

It belongs to the ribose-phosphate pyrophosphokinase family.

The protein localises to the plastid. It localises to the chloroplast. The enzyme catalyses D-ribose 5-phosphate + ATP = 5-phospho-alpha-D-ribose 1-diphosphate + AMP + H(+). This is Ribose-phosphate pyrophosphokinase 2, chloroplastic (PRS2) from Spinacia oleracea (Spinach).